The primary structure comprises 676 residues: Protein kinase C delta type (676 aa).

Residues Met1–Leu106 form the C2 domain. Phosphothreonine occurs at positions 43 and 50. Tyr64 carries the post-translational modification Phosphotyrosine. Ser130 bears the Phosphoserine mark. Thr141 bears the Phosphothreonine mark. A Phosphotyrosine modification is found at Tyr155. The Phorbol-ester/DAG-type 1 zinc finger occupies Asn158–Cys208. Residue Thr218 is modified to Phosphothreonine. The Phorbol-ester/DAG-type 2 zinc finger occupies Pro230 to Cys280. A phosphoserine; by autocatalysis mark is found at Ser299, Ser302, and Ser304. Ser307 is modified (phosphoserine). Phosphotyrosine is present on Tyr313. Residue Tyr334 is modified to Phosphotyrosine; by SRC. Positions Phe349–Phe603 constitute a Protein kinase domain. ATP is bound at residue Leu355–Val363. Tyr374 is subject to Phosphotyrosine. Lys378 contributes to the ATP binding site. Thr451 is modified (phosphothreonine). Asp473 (proton acceptor) is an active-site residue. Residues Ser503 and Ser506 each carry the phosphoserine modification. Thr507 is modified (phosphothreonine; by autocatalysis). The residue at position 567 (Tyr567) is a Phosphotyrosine. The 72-residue stretch at Lys604 to Glu675 folds into the AGC-kinase C-terminal domain. Ser645, Ser654, Ser658, and Ser664 each carry phosphoserine.

This sequence belongs to the protein kinase superfamily. AGC Ser/Thr protein kinase family. PKC subfamily. In terms of assembly, interacts with PDPK1 (via N-terminal region). Interacts with RAD9A. Interacts with CDCP1. Interacts with MUC1. Interacts with VASP. Interacts with CAVIN3. Interacts with PRKD2 (via N-terminus and zing-finger domain 1 and 2) in response to oxidative stress; the interaction is independent of PRKD2 tyrosine phosphorylation. Interacts with PLSC3; interaction is enhanced by UV irradiation. Interacts with PRKCH upstream open reading frame 2; the interaction leads to inhibition of kinase activity. Post-translationally, autophosphorylated and/or phosphorylated at Thr-507, within the activation loop; phosphorylation at Thr-507 is not a prerequisite for enzymatic activity. Autophosphorylated at Ser-299, Ser-302 and Ser-304. Upon TNFSF10/TRAIL treatment, phosphorylated at Tyr-155; phosphorylation is required for its translocation to the endoplasmic reticulum and cleavage by caspase-3. Phosphorylated at Tyr-313, Tyr-334 and Tyr-567; phosphorylation of Tyr-313 and Tyr-567 following thrombin or zymosan stimulation potentiates its kinase activity. Phosphorylated by protein kinase PDPK1; phosphorylation is inhibited by the apoptotic C-terminal cleavage product of PKN2. Phosphorylated at Tyr-313 through a SYK and SRC mechanism downstream of C-type lectin receptors activation, promoting its activation. In terms of processing, proteolytically cleaved into a catalytic subunit and a regulatory subunit by caspase-3 during apoptosis which results in kinase activation.

Its subcellular location is the cytoplasm. The protein localises to the perinuclear region. It is found in the nucleus. It localises to the cell membrane. The protein resides in the mitochondrion. Its subcellular location is the endomembrane system. It catalyses the reaction L-seryl-[protein] + ATP = O-phospho-L-seryl-[protein] + ADP + H(+). The enzyme catalyses L-threonyl-[protein] + ATP = O-phospho-L-threonyl-[protein] + ADP + H(+). The catalysed reaction is L-tyrosyl-[protein] + ATP = O-phospho-L-tyrosyl-[protein] + ADP + H(+). Its activity is regulated as follows. Novel PKCs (PRKCD, PRKCE, PRKCH and PRKCQ) are calcium-insensitive, but activated by diacylglycerol (DAG) and phosphatidylserine. Three specific sites; Thr-507 (activation loop of the kinase domain), Ser-645 (turn motif) and Ser-664 (hydrophobic region), need to be phosphorylated for its full activation. Activated by caspase-3 (CASP3) cleavage during apoptosis. After cleavage, the pseudosubstrate motif in the regulatory subunit is released from the substrate recognition site of the catalytic subunit, which enables PRKCD to become constitutively activated. The catalytic subunit which displays properties of a sphingosine-dependent protein kinase is activated by D-erythro-sphingosine (Sph) or N,N-dimethyl-D-erythrosphingosine (DMS) or N,N,N-trimethyl-D-erythrosphingosine (TMS), but not by ceramide or Sph-1-P and is strongly inhibited by phosphatidylserine. Inhibited by PRKCH upstream open reading frame 2. Calcium-independent, phospholipid- and diacylglycerol (DAG)-dependent serine/threonine-protein kinase that plays contrasting roles in cell death and cell survival by functioning as a pro-apoptotic protein during DNA damage-induced apoptosis, but acting as an anti-apoptotic protein during cytokine receptor-initiated cell death, is involved in tumor suppression as well as survival of several cancers, is required for oxygen radical production by NADPH oxidase and acts as positive or negative regulator in platelet functional responses. Negatively regulates B cell proliferation and also has an important function in self-antigen induced B cell tolerance induction. Upon DNA damage, activates the promoter of the death-promoting transcription factor BCLAF1/Btf to trigger BCLAF1-mediated p53/TP53 gene transcription and apoptosis. In response to oxidative stress, interact with and activate CHUK/IKKA in the nucleus, causing the phosphorylation of p53/TP53. In the case of ER stress or DNA damage-induced apoptosis, can form a complex with the tyrosine-protein kinase ABL1 which trigger apoptosis independently of p53/TP53. In cytosol can trigger apoptosis by activating MAPK11 or MAPK14, inhibiting AKT1 and decreasing the level of X-linked inhibitor of apoptosis protein (XIAP), whereas in nucleus induces apoptosis via the activation of MAPK8 or MAPK9. Upon ionizing radiation treatment, is required for the activation of the apoptosis regulators BAX and BAK, which trigger the mitochondrial cell death pathway. Can phosphorylate MCL1 and target it for degradation which is sufficient to trigger for BAX activation and apoptosis. Is required for the control of cell cycle progression both at G1/S and G2/M phases. Mediates phorbol 12-myristate 13-acetate (PMA)-induced inhibition of cell cycle progression at G1/S phase by up-regulating the CDK inhibitor CDKN1A/p21 and inhibiting the cyclin CCNA2 promoter activity. In response to UV irradiation can phosphorylate CDK1, which is important for the G2/M DNA damage checkpoint activation. Can protect glioma cells from the apoptosis induced by TNFSF10/TRAIL, probably by inducing increased phosphorylation and subsequent activation of AKT1. Is highly expressed in a number of cancer cells and promotes cell survival and resistance against chemotherapeutic drugs by inducing cyclin D1 (CCND1) and hyperphosphorylation of RB1, and via several pro-survival pathways, including NF-kappa-B, AKT1 and MAPK1/3 (ERK1/2). Involved in antifungal immunity by mediating phosphorylation and activation of CARD9 downstream of C-type lectin receptors activation, promoting interaction between CARD9 and BCL10, followed by activation of NF-kappa-B and MAP kinase p38 pathways. Can also act as tumor suppressor upon mitogenic stimulation with PMA or TPA. In N-formyl-methionyl-leucyl-phenylalanine (fMLP)-treated cells, is required for NCF1 (p47-phox) phosphorylation and activation of NADPH oxidase activity, and regulates TNF-elicited superoxide anion production in neutrophils, by direct phosphorylation and activation of NCF1 or indirectly through MAPK1/3 (ERK1/2) signaling pathways. May also play a role in the regulation of NADPH oxidase activity in eosinophil after stimulation with IL5, leukotriene B4 or PMA. In collagen-induced platelet aggregation, acts a negative regulator of filopodia formation and actin polymerization by interacting with and negatively regulating VASP phosphorylation. Downstream of PAR1, PAR4 and CD36/GP4 receptors, regulates differentially platelet dense granule secretion; acts as a positive regulator in PAR-mediated granule secretion, whereas it negatively regulates CD36/GP4-mediated granule release. Phosphorylates MUC1 in the C-terminal and regulates the interaction between MUC1 and beta-catenin. The catalytic subunit phosphorylates 14-3-3 proteins (YWHAB, YWHAZ and YWHAH) in a sphingosine-dependent fashion. Phosphorylates ELAVL1 in response to angiotensin-2 treatment. Phosphorylates mitochondrial phospholipid scramblase 3 (PLSCR3), resulting in increased cardiolipin expression on the mitochondrial outer membrane which facilitates apoptosis. Phosphorylates SMPD1 which induces SMPD1 secretion. The sequence is that of Protein kinase C delta type from Homo sapiens (Human).